The following is a 368-amino-acid chain: tRNA-specific 2-thiouridylase MnmA (368 aa).

ATP-binding positions include 11 to 18 and Met-37; that span reads GMSGGVDS. The interval 97-99 is interaction with target base in tRNA; the sequence is NPD. Cys-102 acts as the Nucleophile in catalysis. Cys-102 and Cys-199 are joined by a disulfide. Gly-127 contributes to the ATP binding site. Residues 149-151 form an interaction with tRNA region; sequence KDQ. The Cysteine persulfide intermediate role is filled by Cys-199. Positions 311–312 are interaction with tRNA; it reads RY.

The protein belongs to the MnmA/TRMU family. Interacts with TusE.

Its subcellular location is the cytoplasm. It catalyses the reaction S-sulfanyl-L-cysteinyl-[protein] + uridine(34) in tRNA + AH2 + ATP = 2-thiouridine(34) in tRNA + L-cysteinyl-[protein] + A + AMP + diphosphate + H(+). Catalyzes the 2-thiolation of uridine at the wobble position (U34) of tRNA(Lys), tRNA(Glu) and tRNA(Gln), leading to the formation of s(2)U34, the first step of tRNA-mnm(5)s(2)U34 synthesis. Sulfur is provided by IscS, via a sulfur-relay system. Binds ATP and its substrate tRNAs. The chain is tRNA-specific 2-thiouridylase MnmA from Klebsiella pneumoniae (strain 342).